Consider the following 276-residue polypeptide: Acetyl-coenzyme A carboxylase carboxyl transferase subunit beta (276 aa).

One can recognise a CoA carboxyltransferase N-terminal domain in the interval 24–276; it reads LWRECSNCHE…NNLLNLHSDK (253 aa). 4 residues coordinate Zn(2+): Cys28, Cys31, Cys46, and Cys49. A C4-type zinc finger spans residues 28–49; it reads CSNCHEKFYYRRAGVYEVCPNC.

Belongs to the AccD/PCCB family. In terms of assembly, acetyl-CoA carboxylase is a heterohexamer composed of biotin carboxyl carrier protein (AccB), biotin carboxylase (AccC) and two subunits each of ACCase subunit alpha (AccA) and ACCase subunit beta (AccD). The cofactor is Zn(2+).

The protein resides in the cytoplasm. The catalysed reaction is N(6)-carboxybiotinyl-L-lysyl-[protein] + acetyl-CoA = N(6)-biotinyl-L-lysyl-[protein] + malonyl-CoA. The protein operates within lipid metabolism; malonyl-CoA biosynthesis; malonyl-CoA from acetyl-CoA: step 1/1. Component of the acetyl coenzyme A carboxylase (ACC) complex. Biotin carboxylase (BC) catalyzes the carboxylation of biotin on its carrier protein (BCCP) and then the CO(2) group is transferred by the transcarboxylase to acetyl-CoA to form malonyl-CoA. The sequence is that of Acetyl-coenzyme A carboxylase carboxyl transferase subunit beta from Pediococcus pentosaceus (strain ATCC 25745 / CCUG 21536 / LMG 10740 / 183-1w).